A 203-amino-acid chain; its full sequence is 2-hydroxychromene-2-carboxylate isomerase (203 aa).

The active-site Nucleophile is the Ser-11. Ser-11 contacts glutathione. Substrate contacts are provided by residues Lys-43, 53–54 (NR), and Tyr-84. Glutathione contacts are provided by residues Val-168 and 179–182 (WGND).

Belongs to the GST superfamily. NadH family. Glutathione serves as cofactor.

The catalysed reaction is 2-hydroxychromene-2-carboxylate = (3E)-4-(2-hydroxyphenyl)-2-oxobut-3-enoate. It functions in the pathway aromatic compound metabolism; naphthalene degradation. In terms of biological role, involved in the naphthalene catabolic pathway. Catalyzes the reversible glutathione-dependent isomerization of 2-hydroxychromene-2-carboxylate (HCCA) to trans-O-hydroxybenzylidenepyruvate (THBPA). In Pseudomonas putida (Arthrobacter siderocapsulatus), this protein is 2-hydroxychromene-2-carboxylate isomerase (nahD).